A 343-amino-acid chain; its full sequence is Calcium/calmodulin-dependent protein kinase type 1B (343 aa).

The Protein kinase domain maps to 15 to 270 (YEIREKLGSG…CQQALQHLWI (256 aa)). ATP-binding positions include 21 to 29 (LGSGAFSEV) and Lys44. Asp136 (proton acceptor) is an active-site residue. The segment at 290–311 (KNFARTHWKRAFNATSFLRHIR) is calmodulin-binding. A disordered region spans residues 314-343 (GQSPEGEEASRQCMTRHSHPGLGTSQSPKW). Ser338 carries the phosphoserine modification.

It belongs to the protein kinase superfamily. CAMK Ser/Thr protein kinase family. CaMK subfamily. Expressed at highest levels in adult brain, and expressed in embryo. In the adult brain detected at high levels in the anterior olfactory nuclei, piriform cortex, septal nuclei, bed nuclei of the stria terminalis, hippocampal pyramidal cells, dentate granule cells, amygdala, hypothalamic nuclei, parabrachial nucleus, and nucleus of the solitary tract. Expressed at lower levels in adult ovary and heart and at very low levels in testis, lung and muscle.

It localises to the cytoplasm. The protein resides in the nucleus. The catalysed reaction is L-seryl-[protein] + ATP = O-phospho-L-seryl-[protein] + ADP + H(+). The enzyme catalyses L-threonyl-[protein] + ATP = O-phospho-L-threonyl-[protein] + ADP + H(+). Its activity is regulated as follows. Activated by Ca(2+)/calmodulin. Calcium/calmodulin-dependent protein kinase belonging to a proposed calcium-triggered signaling cascade. In vitro phosphorylates CREB1 and SYN1/synapsin I. Phosphorylates and activates CAMK1. The sequence is that of Calcium/calmodulin-dependent protein kinase type 1B (Pnck) from Mus musculus (Mouse).